Reading from the N-terminus, the 312-residue chain is Ribosomal RNA small subunit methyltransferase H (312 aa).

S-adenosyl-L-methionine contacts are provided by residues 35 to 37 (GGH), Asp55, Phe85, Asp101, and Gln108.

It belongs to the methyltransferase superfamily. RsmH family.

The protein localises to the cytoplasm. The catalysed reaction is cytidine(1402) in 16S rRNA + S-adenosyl-L-methionine = N(4)-methylcytidine(1402) in 16S rRNA + S-adenosyl-L-homocysteine + H(+). Functionally, specifically methylates the N4 position of cytidine in position 1402 (C1402) of 16S rRNA. The sequence is that of Ribosomal RNA small subunit methyltransferase H from Buchnera aphidicola subsp. Acyrthosiphon pisum (strain Tuc7).